A 263-amino-acid polypeptide reads, in one-letter code: uncharacterized protein (263 aa).

Position 31–38 (31–38 (GPTGSGKT)) interacts with ATP.

This sequence belongs to the CbbQ/NirQ/NorQ/GpvN family.

This is an uncharacterized protein from Staphylococcus aureus (strain NCTC 8325 / PS 47).